The sequence spans 493 residues: E3 ubiquitin-protein ligase Hakai (493 aa).

2 disordered regions span residues 1–20 (MDHN…LGGL) and 28–61 (IKLI…GDEE). The segment covering 7-16 (DLQGTNSSAS) has biased composition (polar residues). An RING-type zinc finger spans residues 109-149 (CDKCGLPIKMYGRMIPCKHVFCYDCAILHEKKGDKMCPGCN). The segment at 148-206 (CNEPVQRIEQCVRGSLFMCSIVQGCKRTYLSQRDLQAHINHRHMRAGKPVTRPPLEPVH) is HYB domain. Residues 164 to 190 (FMCSIVQGCKRTYLSQRDLQAHINHRH) form a C2H2-type zinc finger. The interval 253 to 493 (YNQPHEDIRP…DQARYRPYYQ (241 aa)) is disordered. Pro residues-rich tracts occupy residues 262–276 (PPPA…PPRP), 342–352 (APPPPPPPPIS), 372–389 (APPP…PPPG), and 399–412 (MNHP…PQHG). Residues 427–444 (NPNSLPQFSEDQGTLSPP) show a composition bias toward polar residues. Positions 459–469 (PRGPPPPPRMQ) are enriched in pro residues. Low complexity predominate over residues 470 to 480 (GPPAQAPLAGP).

This sequence belongs to the Hakai family. Homodimer. Interacts with tyrosine-phosphorylated SRC substrates. Component of the WMM complex, a N6-methyltransferase complex composed of a catalytic subcomplex, named MAC, and of an associated subcomplex, named MACOM. Component of the MACOM subcomplex.

It localises to the nucleus speckle. It is found in the nucleus. The protein localises to the nucleoplasm. It catalyses the reaction S-ubiquitinyl-[E2 ubiquitin-conjugating enzyme]-L-cysteine + [acceptor protein]-L-lysine = [E2 ubiquitin-conjugating enzyme]-L-cysteine + N(6)-ubiquitinyl-[acceptor protein]-L-lysine.. It functions in the pathway protein modification; protein ubiquitination. In terms of biological role, E3 ubiquitin-protein ligase that mediates ubiquitination of several tyrosine-phosphorylated Src substrates. Associated component of the WMM complex, a complex that mediates N6-methyladenosine (m6A) methylation of RNAs, a modification that plays a role in the efficiency of mRNA splicing and RNA processing. The chain is E3 ubiquitin-protein ligase Hakai from Gallus gallus (Chicken).